The following is a 332-amino-acid chain: MMNTYDNQHREQQKLSENILKTKPLIAIVGPTAVGKTDISIKVAERLPVSTGIISADSMQVYKKMDIGTAKPSQEIRTKIPHYLVDNVEPDEEFSVGRYQKHAKSILNQLYQNKELPLLVGGTGLYVDALIYDFSMNELPKSTKYRQELQQKAEQDGLEQLYRKLEKVDPDAADRIHPNDQRRIIRALEVYYYTGEPISQRQKRRYDSPYNLLIFGITMDRNKLYNKIETRVDQMIDQGLVEEVKYLLENGYHLQLTSMQGLGYKEIAGYLMGDYDLETAVQKLKKNTKRFAKRQLSWFRRDPNIKWLDITETDKSEICDKIIDMILKEYLE.

ATP is bound at residue 30-37; it reads GPTAVGKT. 32–37 contacts substrate; it reads TAVGKT. The interval 57–60 is interaction with substrate tRNA; sequence DSMQ.

It belongs to the IPP transferase family. Monomer. Mg(2+) is required as a cofactor.

It catalyses the reaction adenosine(37) in tRNA + dimethylallyl diphosphate = N(6)-dimethylallyladenosine(37) in tRNA + diphosphate. Catalyzes the transfer of a dimethylallyl group onto the adenine at position 37 in tRNAs that read codons beginning with uridine, leading to the formation of N6-(dimethylallyl)adenosine (i(6)A). The polypeptide is tRNA dimethylallyltransferase (Natranaerobius thermophilus (strain ATCC BAA-1301 / DSM 18059 / JW/NM-WN-LF)).